The following is a 348-amino-acid chain: MESHKIQLLGLDLSQLERLALDHGESLYRGRQLHQWLYQKGVDNLDDITVLPKAWRNSLIQKGISVGGLVEVNRFIAGDRTIKLLLSTGDGEIIETVGIPSGNRLTICVSSQIGCPMGCQFCATGKDGLKRSLKVNEIVAQVFAVKKAFNRSPSNVVFMGMGEPLLNIEEVLSSICCLNKDLGIGQRRITVSTVGVKNTLPQLAELALQFLGSVQFTLALSLHAPNQKLRESLIPSAQNYPIKLLLEDCRHYLDLTGRRVSFEYILLGHLNDHIEHAEELADLVGGFQSHVNLIAYNPIDGESFQRPSNQRVNIFIKTLQKRGIVVSLRASRGLDKNAACGQLRSMNM.

The active-site Proton acceptor is Glu95. Residues 101–335 (SGNRLTICVS…VSLRASRGLD (235 aa)) form the Radical SAM core domain. The cysteines at positions 108 and 340 are disulfide-linked. [4Fe-4S] cluster-binding residues include Cys115, Cys119, and Cys122. Residues 162 to 163 (GE), Ser192, 221 to 223 (SLH), and Asn297 each bind S-adenosyl-L-methionine. The S-methylcysteine intermediate role is filled by Cys340.

This sequence belongs to the radical SAM superfamily. RlmN family. Requires [4Fe-4S] cluster as cofactor.

The protein resides in the cytoplasm. The catalysed reaction is adenosine(2503) in 23S rRNA + 2 reduced [2Fe-2S]-[ferredoxin] + 2 S-adenosyl-L-methionine = 2-methyladenosine(2503) in 23S rRNA + 5'-deoxyadenosine + L-methionine + 2 oxidized [2Fe-2S]-[ferredoxin] + S-adenosyl-L-homocysteine. It catalyses the reaction adenosine(37) in tRNA + 2 reduced [2Fe-2S]-[ferredoxin] + 2 S-adenosyl-L-methionine = 2-methyladenosine(37) in tRNA + 5'-deoxyadenosine + L-methionine + 2 oxidized [2Fe-2S]-[ferredoxin] + S-adenosyl-L-homocysteine. Specifically methylates position 2 of adenine 2503 in 23S rRNA and position 2 of adenine 37 in tRNAs. This chain is Probable dual-specificity RNA methyltransferase RlmN, found in Prochlorococcus marinus (strain SARG / CCMP1375 / SS120).